Consider the following 520-residue polypeptide: MSNNSNNNIKTYYIIGIITLIFIVSAVIKNQLSSSNQEQQEEEEETDSMGKSKGRGNKKGKKPEKIQEKKLDNHLKNLEKVKLQEDFKLQQDEKQQLKKEETILVEKQEIVVDELKNKKDEEKQQQQQEEDQQQQQQQQQEEEEEEEEQQEIEEDEEEEEGQEQEEEEEQQEIEEGEEEQQEEEQEEEQFSMFGVSIERLMDFQRQEDENEGSDEVEESSKVPIVLSFMLDRIKNLNGFKTEGLFRVNGNLKLVEQLATEGFDPFSDDLDPNVNTWASLLKKWIRDLPEPLIPHELNPIILDFCTNNNINNTCNNNNDNNNNNNFNVCASTNNLGNVLNLSTNICNNNNNNNNNNNNNNNNNNNNDNNNNNNESIEKKITNIINMIKSDDHRNVLYKIGEFFGEMLQEETVLITKINVESLSKILTPSLFKPNNIIDDFSNGSLNGSGNQIPKYLTTLDLPSILLKQKKEIAFVSCLLNYFKDEYSKKLQEQNDQEEDNQEEEKDNQEEDEDEEDKDQEE.

Residues 8–28 form a helical membrane-spanning segment; the sequence is NIKTYYIIGIITLIFIVSAVI. Residues 28-192 are a coiled coil; the sequence is IKNQLSSSNQ…EEQEEEQFSM (165 aa). Disordered stretches follow at residues 33 to 73, 121 to 189, 348 to 373, and 489 to 520; these read SSSN…KLDN, EEKQ…EEEQ, NNNN…NNNE, and LQEQ…DQEE. Residues 52–62 are compositionally biased toward basic residues; the sequence is SKGRGNKKGKK. Positions 63–73 are enriched in basic and acidic residues; that stretch reads PEKIQEKKLDN. Residues 140-189 show a composition bias toward acidic residues; sequence QEEEEEEEEQQEIEEDEEEEEGQEQEEEEEQQEIEEGEEEQQEEEQEEEQ. The 278-residue stretch at 195–472 folds into the Rho-GAP domain; that stretch reads VSIERLMDFQ…ILLKQKKEIA (278 aa). A compositionally biased stretch (low complexity) spans 348 to 372; that stretch reads NNNNNNNNNNNNNNNNNNDNNNNNN. Positions 480-520 form a coiled coil; it reads YFKDEYSKKLQEQNDQEEDNQEEEKDNQEEDEDEEDKDQEE. A compositionally biased stretch (acidic residues) spans 493–520; sequence NDQEEDNQEEEKDNQEEDEDEEDKDQEE.

The protein resides in the membrane. Rho GTPase-activating protein involved in the signal transduction pathway. In Dictyostelium discoideum (Social amoeba), this protein is Rho GTPase-activating protein gacV (gacV).